A 1334-amino-acid chain; its full sequence is MDYRHPNALGVNESSRAYEEIFGAPRKREPARTVSTPAFMEPAPVSKKPLPPPTRRLPRKPLPFRSTSLQPPSSQPPAPPTHQREASPVKNIEHSESFPSVFGTSNNHQIVPLTLKDGNDFGALYASLNTTPHFPQVSNHAPNNSNSPSLTWHTSSGDDSNQNPFFVRRQSQSSTSPVSDSVDENLLSAVSSVTESVETNLHLDQNYPYGSPVRSSKNPFLSSNSRLPTDDSSHTVGSHSFTSGTHPPIVSSNSAFTLPNAVTPAAQAPLIRSVSEYPANVSPPAQSLQLPKSTSNPADLHLSIASASSHKNIFSGLDVFSNVFHGPSTTLRDREHDMRNRSFDHSTLAHYEAVKQQRLGVEPTARSFTLSSYKSRASGNSLINDRSSTTTPTFVNSEASSPVHKNKRRRRIYAALLSRVASELLDRLQLGDITKDGLIYSNAFTGDHAVTVLMGIIHTSDRNLALLVGRSLDAQKFIHDVTYDHRLRDSHREIYQLQGTGYRPFLRANDNASINNKNHHKELEDNESGTRISPSTLGDTSFPNGIFTLLTHCYSPTCAKDHPCYSISCPRRLEQQHRLFAKMRANTEQSSSLAFDDKEQKLWIHSVPQEIAYSVSDRERKRQEVICEVIYTERDFVKDLEYLRDYWIKPLWASSCIPERKKEKFIRTVFLNALEVQAVNSKLAEALTKRQNYKPIVDNIADIFLEHVPKFEPFIRYGAGQLYGKYEFEKEKSSNPAFAKFVSDVERLKESRKLELNGYLTKPTTRLARYPLLLEAVLKYTDEGNPDKQDIPKVINIVRGFLSRLNVESGKAENKFNLFHLNQQLVFKPGEHYDLHLLDANRQLIFKGPLKKRSAGSTSSESASDVTLFLFDHALLIVKPKTINKRELLKVFQRPIPLLLLQLFLVDDNGLRIPYSSKQQLAAVSKAANGKPPSRFYPFSLQLLGRRGYEITLYATTEVSRDKWLEHIDNQQTLLQHRNQWFESVTICSNFFVGDNKVNAIGVYDSGRRLLYGTDTGVYVSLRKANSPLQFKPVRALNIPNISQLEVIEEYSLLLLLSDKVLYSYPLEMIDADTTQAPKKARKVSGHTTFFRVGICLGKVLVCAVKSSVLSATIKVFEPVTNYSKTRNMPSLKKFLTVNQDPLRIVKELYIPTESTSVHFLKNKLCVGCTRGFEVVSLDNLETQSLLDPADTSLEFVEKKENVKPIAIYRMNGGEFLLCYSQFAFYVNRDGWRSRPTWFVVWEGSPQNFALSYPYILAFEPTFIEIRHVETSELIHVISGRNIRLLADGRGKLGDGGEIFYACDQRGENCETSVVCSLRLTSAAAHAKEQHVDK.

Disordered stretches follow at residues 1–89 (MDYR…ASPV), 135–182 (PQVS…SDSV), 203–245 (LDQN…TSGT), and 381–402 (SLINDRSSTTTPTFVNSEASSP). Residues 138–149 (SNHAPNNSNSPS) show a composition bias toward low complexity. Residues 150-164 (LTWHTSSGDDSNQNP) are compositionally biased toward polar residues. Low complexity predominate over residues 170–180 (QSQSSTSPVSD). 3 stretches are compositionally biased toward polar residues: residues 213–227 (VRSSKNPFLSSNSRL), 234–245 (HTVGSHSFTSGT), and 381–400 (SLINDRSSTTTPTFVNSEAS). Position 381 is a phosphoserine (S381). One can recognise a DH domain in the interval 621 to 808 (KRQEVICEVI…RGFLSRLNVE (188 aa)). One can recognise a PH domain in the interval 843-973 (QLIFKGPLKK…WLEHIDNQQT (131 aa)). A CNH domain is found at 995–1293 (DNKVNAIGVY…RLLADGRGKL (299 aa)).

The protein resides in the cytoplasm. Functionally, stimulates the exchange of Rho1 and Rho5 GDP-bound form into GTP-bound form. Controls septum formation, cell wall synthesis and localization of F-actin patches. Coordinates actin deposition with cell wall biosynthesis during bipolar growth. This is Rho1 guanine nucleotide exchange factor 1 (rgf1) from Schizosaccharomyces pombe (strain 972 / ATCC 24843) (Fission yeast).